A 234-amino-acid polypeptide reads, in one-letter code: Ribosome maturation protein SDO1 homolog (234 aa).

Belongs to the SDO1/SBDS family.

This chain is Ribosome maturation protein SDO1 homolog, found in Archaeoglobus fulgidus (strain ATCC 49558 / DSM 4304 / JCM 9628 / NBRC 100126 / VC-16).